The primary structure comprises 136 residues: Large ribosomal subunit protein eL27B (136 aa).

The protein belongs to the eukaryotic ribosomal protein eL27 family. In terms of assembly, component of the large ribosomal subunit (LSU). Mature yeast ribosomes consist of a small (40S) and a large (60S) subunit. The 40S small subunit contains 1 molecule of ribosomal RNA (18S rRNA) and 33 different proteins (encoded by 57 genes). The large 60S subunit contains 3 rRNA molecules (25S, 5.8S and 5S rRNA) and 46 different proteins (encoded by 81 genes).

Its subcellular location is the cytoplasm. Functionally, component of the ribosome, a large ribonucleoprotein complex responsible for the synthesis of proteins in the cell. The small ribosomal subunit (SSU) binds messenger RNAs (mRNAs) and translates the encoded message by selecting cognate aminoacyl-transfer RNA (tRNA) molecules. The large subunit (LSU) contains the ribosomal catalytic site termed the peptidyl transferase center (PTC), which catalyzes the formation of peptide bonds, thereby polymerizing the amino acids delivered by tRNAs into a polypeptide chain. The nascent polypeptides leave the ribosome through a tunnel in the LSU and interact with protein factors that function in enzymatic processing, targeting, and the membrane insertion of nascent chains at the exit of the ribosomal tunnel. This is Large ribosomal subunit protein eL27B from Saccharomyces cerevisiae (strain ATCC 204508 / S288c) (Baker's yeast).